The sequence spans 496 residues: Aspartyl/glutamyl-tRNA(Asn/Gln) amidotransferase subunit B (496 aa).

It belongs to the GatB/GatE family. GatB subfamily. In terms of assembly, heterotrimer of A, B and C subunits.

It catalyses the reaction L-glutamyl-tRNA(Gln) + L-glutamine + ATP + H2O = L-glutaminyl-tRNA(Gln) + L-glutamate + ADP + phosphate + H(+). The enzyme catalyses L-aspartyl-tRNA(Asn) + L-glutamine + ATP + H2O = L-asparaginyl-tRNA(Asn) + L-glutamate + ADP + phosphate + 2 H(+). Its function is as follows. Allows the formation of correctly charged Asn-tRNA(Asn) or Gln-tRNA(Gln) through the transamidation of misacylated Asp-tRNA(Asn) or Glu-tRNA(Gln) in organisms which lack either or both of asparaginyl-tRNA or glutaminyl-tRNA synthetases. The reaction takes place in the presence of glutamine and ATP through an activated phospho-Asp-tRNA(Asn) or phospho-Glu-tRNA(Gln). The sequence is that of Aspartyl/glutamyl-tRNA(Asn/Gln) amidotransferase subunit B from Picosynechococcus sp. (strain ATCC 27264 / PCC 7002 / PR-6) (Agmenellum quadruplicatum).